Here is a 298-residue protein sequence, read N- to C-terminus: ATP phosphoribosyltransferase (298 aa).

The protein belongs to the ATP phosphoribosyltransferase family.

It localises to the cytoplasm. It carries out the reaction 1-(5-phospho-beta-D-ribosyl)-ATP + diphosphate = 5-phospho-alpha-D-ribose 1-diphosphate + ATP. It functions in the pathway amino-acid biosynthesis; L-histidine biosynthesis; L-histidine from 5-phospho-alpha-D-ribose 1-diphosphate: step 1/9. Functionally, catalyzes the condensation of ATP and 5-phosphoribose 1-diphosphate to form N'-(5'-phosphoribosyl)-ATP (PR-ATP). Has a crucial role in the pathway because the rate of histidine biosynthesis seems to be controlled primarily by regulation of the enzymatic activity. This Candida albicans (strain SC5314 / ATCC MYA-2876) (Yeast) protein is ATP phosphoribosyltransferase (HIS1).